Consider the following 624-residue polypeptide: Chaperone protein HtpG (624 aa).

The tract at residues 1–336 (MKGQETRGFQ…SSDLSLNVSR (336 aa)) is a; substrate-binding. The tract at residues 337–552 (EILQDSTVTR…ADEMSTQMAK (216 aa)) is b. Residues 553-624 (LFAAAGQKVP…IRRMNQLLVS (72 aa)) are c.

It belongs to the heat shock protein 90 family. As to quaternary structure, homodimer.

The protein resides in the cytoplasm. Functionally, molecular chaperone. Has ATPase activity. This Shigella dysenteriae serotype 1 (strain Sd197) protein is Chaperone protein HtpG.